Consider the following 1244-residue polypeptide: Ras-specific guanine nucleotide-releasing factor 1 (1244 aa).

The PH 1 domain occupies 22–129 (DGTRKGYLSK…WVAAIARASY (108 aa)). A Phosphoserine; by PLK2 modification is found at Ser71. Residues 204–229 (KKIKKVQSFLRGWLCRRKWKNIIQDY) form the IQ domain. Residues 240-426 (KRNQVVFSML…EELSRVMHDE (187 aa)) enclose the DH domain. The PH 2 domain occupies 456–582 (TFVRQGSLIQ…WTSDIIQCVD (127 aa)). Phosphoserine; by PLK2 occurs at positions 575 and 611. The N-terminal Ras-GEF domain occupies 629-743 (KVLQIRYASV…RRRKLSLNIP (115 aa)). The segment at 707-730 (GDAPKSPRASRKFSSPPPLAIGTS) is disordered. At Ser739 the chain carries Phosphoserine. 2 positions are modified to phosphoserine; by PLK2: Ser760 and Ser781. Positions 800–840 (TLEESSGFRKPTSDILKEESDDDQSDVDDTEVSPPTPKSFR) are disordered. Over residues 818-830 (ESDDDQSDVDDTE) the composition is skewed to acidic residues. Ser854 bears the Phosphoserine; by PLK2 mark. The Ras-GEF domain maps to 1009 to 1241 (SAMEIAEQLT…YEASLRIEPK (233 aa)).

In terms of assembly, homooligomer and heterooligomer with RASGRF2. Interacts with USP8, thereby regulating its stability. Post-translationally, phosphorylated by PLK2, leading to ubiquitination and degradation by the proteasome. Ubiquitinated and degraded following phosphorylation by PLK2. In terms of processing, phosphorylated by SRC and LCK. Phosphorylation by LCK increases its capacity to stimulate the GDP/GTP exchange on Ras, whereas its phosphorylation by SRC seems not to have an effect on stimulation activity.

Its function is as follows. Promotes the exchange of Ras-bound GDP by GTP. The chain is Ras-specific guanine nucleotide-releasing factor 1 (Rasgrf1) from Rattus norvegicus (Rat).